The sequence spans 104 residues: Large ribosomal subunit protein uL24 (104 aa).

It belongs to the universal ribosomal protein uL24 family. As to quaternary structure, part of the 50S ribosomal subunit.

Its function is as follows. One of two assembly initiator proteins, it binds directly to the 5'-end of the 23S rRNA, where it nucleates assembly of the 50S subunit. One of the proteins that surrounds the polypeptide exit tunnel on the outside of the subunit. This is Large ribosomal subunit protein uL24 from Pseudomonas fluorescens (strain Pf0-1).